The following is a 345-amino-acid chain: Phosphoribosylformylglycinamidine cyclo-ligase (345 aa).

Belongs to the AIR synthase family.

The protein resides in the cytoplasm. The catalysed reaction is 2-formamido-N(1)-(5-O-phospho-beta-D-ribosyl)acetamidine + ATP = 5-amino-1-(5-phospho-beta-D-ribosyl)imidazole + ADP + phosphate + H(+). It participates in purine metabolism; IMP biosynthesis via de novo pathway; 5-amino-1-(5-phospho-D-ribosyl)imidazole from N(2)-formyl-N(1)-(5-phospho-D-ribosyl)glycinamide: step 2/2. The protein is Phosphoribosylformylglycinamidine cyclo-ligase of Escherichia coli O7:K1 (strain IAI39 / ExPEC).